The chain runs to 444 residues: Argininosuccinate synthase (444 aa).

ATP is bound by residues 18–26 (AFSGGLDTS) and A44. Residue Y100 participates in L-citrulline binding. G130 and T132 together coordinate ATP. Residues T132, N136, and D137 each contribute to the L-aspartate site. N136 provides a ligand contact to L-citrulline. D137 contributes to the ATP binding site. L-citrulline is bound by residues R140 and S193. D195 serves as a coordination point for ATP. L-citrulline-binding residues include T202, E204, and E281.

This sequence belongs to the argininosuccinate synthase family. Type 2 subfamily. Homotetramer.

The protein localises to the cytoplasm. It carries out the reaction L-citrulline + L-aspartate + ATP = 2-(N(omega)-L-arginino)succinate + AMP + diphosphate + H(+). It functions in the pathway amino-acid biosynthesis; L-arginine biosynthesis; L-arginine from L-ornithine and carbamoyl phosphate: step 2/3. The sequence is that of Argininosuccinate synthase from Actinobacillus succinogenes (strain ATCC 55618 / DSM 22257 / CCUG 43843 / 130Z).